A 102-amino-acid chain; its full sequence is Small ribosomal subunit protein uS10 (102 aa).

Belongs to the universal ribosomal protein uS10 family. In terms of assembly, part of the 30S ribosomal subunit.

Its function is as follows. Involved in the binding of tRNA to the ribosomes. The chain is Small ribosomal subunit protein uS10 from Dehalococcoides mccartyi (strain ATCC BAA-2266 / KCTC 15142 / 195) (Dehalococcoides ethenogenes (strain 195)).